We begin with the raw amino-acid sequence, 85 residues long: Large ribosomal subunit protein bL27 (85 aa).

It belongs to the bacterial ribosomal protein bL27 family.

The protein is Large ribosomal subunit protein bL27 of Ruthia magnifica subsp. Calyptogena magnifica.